Reading from the N-terminus, the 141-residue chain is Oleosin L (141 aa).

The next 3 membrane-spanning stretches (helical) occupy residues 23–43, 46–66, and 74–94; these read VLFFVVMGGGVLASLSALALA, VVLMLILTPVFLLLSPVILPV, and AAAFMAAVTIGIAGAAALIWV. Residues 54-65 carry the Proline-knot motif; the sequence is PVFLLLSPVILP.

This sequence belongs to the oleosin family. As to expression, expressed in megagametophytes (at protein level).

The protein localises to the lipid droplet. The protein resides in the membrane. The sequence is that of Oleosin L from Pinus massoniana (Chinese red pine).